The sequence spans 305 residues: Chromatin modification-related protein png2 (305 aa).

The segment at 135 to 239 is disordered; the sequence is TVTPQTSERR…PLVKHDTLDS (105 aa). Residues 153–167 are compositionally biased toward low complexity; the sequence is NQHSQQYSSQERSSS. 2 stretches are compositionally biased toward polar residues: residues 168 to 183 and 195 to 210; these read YNNF…SYHT and KSSS…APQS. At Tyr-181 the chain carries Phosphotyrosine. A Phosphothreonine modification is found at Thr-183. 2 positions are modified to phosphoserine: Ser-197 and Ser-198. Residues 211–223 are compositionally biased toward basic and acidic residues; it reads TERRPVRRSESRL. A PHD-type zinc finger spans residues 248-297; the sequence is QLYCYCQQVSYGQMIGCDNENCKREWFHLPCVGLVEPPKGIWYCKECEEL. Cys-251, Cys-253, Cys-264, Cys-269, His-275, Cys-278, Cys-291, and Cys-294 together coordinate Zn(2+).

The protein belongs to the ING family. In terms of assembly, interacts with H3K4me3 and to a lesser extent with H3K4me2. Component of the clr6 histone deacetylase complex I'composed of at least clr6, png2, prw1, pst1 and sds3.

The protein resides in the cytoplasm. It is found in the nucleus. Its function is as follows. Component of the clr6 histone deacetylase complex I' responsible for the deacetylation of lysine residues on the N-terminal part of the core histones (H2A, H2B, H3 and H4). Histone deacetylation gives a tag for epigenetic repression and plays an important role in transcriptional regulation, cell cycle progression and developmental events. Has a role in silencing of mating type genes. This Schizosaccharomyces pombe (strain 972 / ATCC 24843) (Fission yeast) protein is Chromatin modification-related protein png2 (png2).